The primary structure comprises 880 residues: Alanine--tRNA ligase (880 aa).

Zn(2+) is bound by residues His566, His570, Cys668, and His672.

Belongs to the class-II aminoacyl-tRNA synthetase family. Requires Zn(2+) as cofactor.

Its subcellular location is the cytoplasm. It catalyses the reaction tRNA(Ala) + L-alanine + ATP = L-alanyl-tRNA(Ala) + AMP + diphosphate. Functionally, catalyzes the attachment of alanine to tRNA(Ala) in a two-step reaction: alanine is first activated by ATP to form Ala-AMP and then transferred to the acceptor end of tRNA(Ala). Also edits incorrectly charged Ser-tRNA(Ala) and Gly-tRNA(Ala) via its editing domain. This chain is Alanine--tRNA ligase, found in Alkaliphilus oremlandii (strain OhILAs) (Clostridium oremlandii (strain OhILAs)).